Reading from the N-terminus, the 164-residue chain is Lipoprotein signal peptidase (164 aa).

3 consecutive transmembrane segments (helical) span residues 12–32 (FLWL…WIVA), 70–90 (WLFT…LKET), and 93–113 (QQVM…GNVF). Catalysis depends on residues D123 and D141. The helical transmembrane segment at 133–153 (YWPAFNVADSAICLGAFLLVI) threads the bilayer.

It belongs to the peptidase A8 family.

The protein localises to the cell inner membrane. It carries out the reaction Release of signal peptides from bacterial membrane prolipoproteins. Hydrolyzes -Xaa-Yaa-Zaa-|-(S,diacylglyceryl)Cys-, in which Xaa is hydrophobic (preferably Leu), and Yaa (Ala or Ser) and Zaa (Gly or Ala) have small, neutral side chains.. It functions in the pathway protein modification; lipoprotein biosynthesis (signal peptide cleavage). Its function is as follows. This protein specifically catalyzes the removal of signal peptides from prolipoproteins. This chain is Lipoprotein signal peptidase, found in Pseudoalteromonas atlantica (strain T6c / ATCC BAA-1087).